The following is a 652-amino-acid chain: Acetyl-coenzyme A synthetase (652 aa).

Residues 191–194 (RAGR), Thr-311, and Asn-335 contribute to the CoA site. Residues 387 to 389 (GEP), 411 to 416 (DTWWQT), Asp-500, and Arg-515 each bind ATP. Ser-523 contacts CoA. Residue Arg-526 coordinates ATP. Residues Val-537, His-539, and Ile-542 each contribute to the Mg(2+) site. Arg-584 contacts CoA. N6-acetyllysine is present on Lys-609.

Belongs to the ATP-dependent AMP-binding enzyme family. Mg(2+) is required as a cofactor. In terms of processing, acetylated. Deacetylation by the SIR2-homolog deacetylase activates the enzyme.

The catalysed reaction is acetate + ATP + CoA = acetyl-CoA + AMP + diphosphate. In terms of biological role, catalyzes the conversion of acetate into acetyl-CoA (AcCoA), an essential intermediate at the junction of anabolic and catabolic pathways. Acs undergoes a two-step reaction. In the first half reaction, Acs combines acetate with ATP to form acetyl-adenylate (AcAMP) intermediate. In the second half reaction, it can then transfer the acetyl group from AcAMP to the sulfhydryl group of CoA, forming the product AcCoA. Functionally, enables the cell to use acetate during aerobic growth to generate energy via the TCA cycle, and biosynthetic compounds via the glyoxylate shunt. Acetylates CheY, the response regulator involved in flagellar movement and chemotaxis. This Yersinia pestis protein is Acetyl-coenzyme A synthetase.